Consider the following 945-residue polypeptide: Collagen-like protein 1 (945 aa).

Disordered stretches follow at residues 80–226 (SLKG…SPDL) and 257–441 (GEKG…DKGE). Collagen-like domains are found at residues 83 to 142 (GDPG…QGDK) and 146 to 205 (GDVG…KGDK). Basic and acidic residues-rich tracts occupy residues 109–145 (QGTK…KGDQ) and 168–208 (DQGD…KGDK). N-linked (GlcNAc...) asparagine; by host glycosylation occurs at Asn211. Collagen-like domains lie at 257–376 (GEKG…KGDK), 383–442 (GDKG…KGEN), 488–547 (GEKG…VGDK), 554–613 (GDKG…KGDV), and 635–694 (GDKG…VGAS). The N-linked (GlcNAc...) asparagine; by host glycan is linked to Asn442. The span at 488–687 (GEKGDKGDTG…DKGDKGDKGD (200 aa)) shows a compositional bias: basic and acidic residues. Residues 488–712 (GEKGDKGDTG…SPTTGENGDS (225 aa)) form a disordered region. Residues 703 to 712 (SPTTGENGDS) are compositionally biased toward polar residues. An N-linked (GlcNAc...) asparagine; by host glycan is attached at Asn716. A disordered region spans residues 733 to 768 (TNIKGDKGDKGDKGDKGDKGDTGDVGLKGDTGTPGS). The span at 736–754 (KGDKGDKGDKGDKGDKGDT) shows a compositional bias: basic and acidic residues. Residues 756–765 (DVGLKGDTGT) are compositionally biased toward low complexity.

May be hydroxylated on lysine by the viral-encoded procollagen-lysine,2-oxoglutarate 5-dioxygenase.

It localises to the virion. In terms of biological role, may participate in the formation of a layer of cross-linked glycosylated fibrils at the viral surface thus giving it a hairy-like appearance. This is Collagen-like protein 1 from Acanthamoeba polyphaga mimivirus (APMV).